A 122-amino-acid polypeptide reads, in one-letter code: Large ribosomal subunit protein uL14c (122 aa).

This sequence belongs to the universal ribosomal protein uL14 family. Part of the 50S ribosomal subunit.

Its subcellular location is the plastid. The protein resides in the chloroplast. Binds to 23S rRNA. This chain is Large ribosomal subunit protein uL14c, found in Guizotia abyssinica (Niger).